The chain runs to 273 residues: Bis(5'-nucleosyl)-tetraphosphatase, symmetrical (273 aa).

The protein belongs to the Ap4A hydrolase family.

It catalyses the reaction P(1),P(4)-bis(5'-adenosyl) tetraphosphate + H2O = 2 ADP + 2 H(+). Functionally, hydrolyzes diadenosine 5',5'''-P1,P4-tetraphosphate to yield ADP. The chain is Bis(5'-nucleosyl)-tetraphosphatase, symmetrical from Aeromonas hydrophila subsp. hydrophila (strain ATCC 7966 / DSM 30187 / BCRC 13018 / CCUG 14551 / JCM 1027 / KCTC 2358 / NCIMB 9240 / NCTC 8049).